Consider the following 1170-residue polypeptide: Putative DNA topoisomerase 2, mitochondrial (1170 aa).

ATP contacts are provided by residues N106, N135, 163 to 165 (SSN), 176 to 183 (GRNGYGAK), and 396 to 398 (QTK). The Toprim domain maps to 475-590 (CTLILTEGDS…SLVHTDGFIQ (116 aa)). Mg(2+) is bound by residues E481, D559, and D561. Positions 722–1157 (IPSLIDGLKP…DWKSVWRSEL (436 aa)) constitute a Topo IIA-type catalytic domain. Y813 (O-(5'-phospho-DNA)-tyrosine intermediate) is an active-site residue.

The protein belongs to the type II topoisomerase family. As to quaternary structure, homodimer. Requires Mg(2+) as cofactor. Mn(2+) serves as cofactor. It depends on Ca(2+) as a cofactor.

Its subcellular location is the mitochondrion. The enzyme catalyses ATP-dependent breakage, passage and rejoining of double-stranded DNA.. Functionally, control of topological states of DNA by transient breakage and subsequent rejoining of DNA strands. Topoisomerase II makes double-strand breaks. The sequence is that of Putative DNA topoisomerase 2, mitochondrial from Caenorhabditis elegans.